The chain runs to 244 residues: Venom nerve growth factor 2 (244 aa).

A signal peptide spans 1–18 (MSMLCYTLIIAFLIGTWA). Residues 19 to 125 (APKSEDNVPL…TLNRNIRAKR (107 aa)) constitute a propeptide that is removed on maturation. Residues 47–66 (GLKTSRNTDQRHPAPKKAED) are compositionally biased toward basic and acidic residues. The disordered stretch occupies residues 47–67 (GLKTSRNTDQRHPAPKKAEDQ). 3 disulfide bridges follow: C139–C205, C181–C233, and C193–C235.

Belongs to the NGF-beta family. As to quaternary structure, homodimer; non-covalently linked. As to expression, expressed by the venom gland.

Its subcellular location is the secreted. Functionally, nerve growth factor is important for the development and maintenance of the sympathetic and sensory nervous systems. It stimulates division and differentiation of sympathetic and embryonic sensory neurons as well as basal forebrain cholinergic neurons in the brain. Its relevance in the snake venom is not clear. However, it has been shown to inhibit metalloproteinase-dependent proteolysis of platelet glycoprotein Ib alpha, suggesting a metalloproteinase inhibition to prevent metalloprotease autodigestion and/or protection against prey proteases. Binds a lipid between the two protein chains in the homodimer. The lipid-bound form promotes histamine relase from mouse mast cells, contrary to the lipid-free form. This chain is Venom nerve growth factor 2, found in Tropidechis carinatus (Australian rough-scaled snake).